Consider the following 378-residue polypeptide: Prolargin (378 aa).

The N-terminal stretch at 1–21 (MRASFFWLLPLLLILASVAQG) is a signal peptide. The disordered stretch occupies residues 22–62 (QPTRPKPGIRRKPKPRPTPRFPQAPEPAEPTDLPPPLPPGP). Over residues 28 to 38 (PGIRRKPKPRP) the composition is skewed to basic residues. A compositionally biased stretch (pro residues) spans 39–62 (TPRFPQAPEPAEPTDLPPPLPPGP). LRR repeat units follow at residues 91–110 (RRVPVIPPRIHYLYLQNNFI), 111–134 (TELPLESFQNATGLRWVNLDNNRI), 135–158 (RKVDQRVLGKLPSLAFLYMEKNQL), 159–179 (EEVPSALPRNLEQLRLSQNLI), 180–203 (SRIPPGVFSKLENLLLLDLQHNRL), 204–229 (SDGVFKADTFQGLKNLMQLNLAHNIL), 230–250 (RKMPPKVPQAIHQLYLDSNKI), 251–274 (ETIPNGYFKDFPNLAFIRMNYNKL), 275–299 (SDRGLPKNSFNISNLLVLHLSHNKI), 300–319 (SNVPAISNKLEHLYLNNNSI), 320–358 (EKINGTQICPNNLVAFHDFSSDLENVPHLRYLRLDGNFL), and 359–378 (KPPIPLDLMMCFRLLQSVVI). An N-linked (GlcNAc...) asparagine glycan is attached at Asn120. N-linked (GlcNAc...) asparagine glycans are attached at residues Asn285, Asn316, and Asn323. Cys328 and Cys369 are joined by a disulfide.

This sequence belongs to the small leucine-rich proteoglycan (SLRP) family. SLRP class II subfamily. As to quaternary structure, binds the basement membrane heparan sulfate proteoglycan perlecan and triple helical collagens type I and type II. In terms of processing, glycosylated; contains heparan sulfate. Expressed in cartilage throughout both fetal development and postnatal life. It is also expressed in the developing embryo prior to skeletogenesis. In adult, highest expression in lung, lower levels in cardiac and skeletal muscle.

The protein resides in the secreted. It localises to the extracellular space. The protein localises to the extracellular matrix. Functionally, may anchor basement membranes to the underlying connective tissue. The chain is Prolargin (Prelp) from Mus musculus (Mouse).